The primary structure comprises 64 residues: Large ribosomal subunit protein bL35 (64 aa).

This sequence belongs to the bacterial ribosomal protein bL35 family.

This chain is Large ribosomal subunit protein bL35, found in Chloroherpeton thalassium (strain ATCC 35110 / GB-78).